The primary structure comprises 167 residues: Ribosome maturation factor RimM (167 aa).

Residues 94–165 form the PRC barrel domain; sequence EHEYYYSDII…TIKITPMEGL (72 aa).

It belongs to the RimM family. In terms of assembly, binds ribosomal protein uS19.

The protein localises to the cytoplasm. Functionally, an accessory protein needed during the final step in the assembly of 30S ribosomal subunit, possibly for assembly of the head region. Essential for efficient processing of 16S rRNA. May be needed both before and after RbfA during the maturation of 16S rRNA. It has affinity for free ribosomal 30S subunits but not for 70S ribosomes. This chain is Ribosome maturation factor RimM, found in Staphylococcus epidermidis (strain ATCC 35984 / DSM 28319 / BCRC 17069 / CCUG 31568 / BM 3577 / RP62A).